We begin with the raw amino-acid sequence, 485 residues long: NADH-quinone oxidoreductase subunit N (485 aa).

A run of 14 helical transmembrane segments spans residues 8–28 (LIAL…MLSI), 35–55 (FLNA…LWFV), 71–91 (GFAM…CTFA), 105–125 (FYLL…ANHL), 127–147 (SLFL…GYAF), 159–179 (YTIL…LVYA), 203–223 (LLAG…LVPF), 235–255 (PAPV…GVVM), 271–291 (VVLA…ALSQ), 297–317 (LLGY…IALQ), 326–346 (VGVY…VVSL), 373–393 (AAVM…LGFI), 408–430 (WWLV…RVAV), and 455–475 (IVVL…QPLI).

Belongs to the complex I subunit 2 family. NDH-1 is composed of 13 different subunits. Subunits NuoA, H, J, K, L, M, N constitute the membrane sector of the complex.

It localises to the cell inner membrane. The enzyme catalyses a quinone + NADH + 5 H(+)(in) = a quinol + NAD(+) + 4 H(+)(out). Its function is as follows. NDH-1 shuttles electrons from NADH, via FMN and iron-sulfur (Fe-S) centers, to quinones in the respiratory chain. The immediate electron acceptor for the enzyme in this species is believed to be ubiquinone. Couples the redox reaction to proton translocation (for every two electrons transferred, four hydrogen ions are translocated across the cytoplasmic membrane), and thus conserves the redox energy in a proton gradient. The protein is NADH-quinone oxidoreductase subunit N of Shigella flexneri.